The primary structure comprises 364 residues: Chaperone protein DnaJ (364 aa).

In terms of domain architecture, J spans 4–69; it reads DYYEILGLSK…NKKAKYDRFG (66 aa). A CR-type zinc finger spans residues 135-213; sequence GYKNNINITR…CKGKGRITNQ (79 aa). Residues Cys148, Cys151, Cys165, Cys168, Cys187, Cys190, Cys201, and Cys204 each contribute to the Zn(2+) site. CXXCXGXG motif repeat units follow at residues 148–155, 165–172, 187–194, and 201–208; these read CHSCLGKK, CNMCNGSG, CSKCYGEG, and CKSCKGKG.

This sequence belongs to the DnaJ family. In terms of assembly, homodimer. Requires Zn(2+) as cofactor.

The protein localises to the cytoplasm. Its function is as follows. Participates actively in the response to hyperosmotic and heat shock by preventing the aggregation of stress-denatured proteins and by disaggregating proteins, also in an autonomous, DnaK-independent fashion. Unfolded proteins bind initially to DnaJ; upon interaction with the DnaJ-bound protein, DnaK hydrolyzes its bound ATP, resulting in the formation of a stable complex. GrpE releases ADP from DnaK; ATP binding to DnaK triggers the release of the substrate protein, thus completing the reaction cycle. Several rounds of ATP-dependent interactions between DnaJ, DnaK and GrpE are required for fully efficient folding. Also involved, together with DnaK and GrpE, in the DNA replication of plasmids through activation of initiation proteins. This is Chaperone protein DnaJ from Borrelia garinii subsp. bavariensis (strain ATCC BAA-2496 / DSM 23469 / PBi) (Borreliella bavariensis).